Consider the following 721-residue polypeptide: Pentatricopeptide repeat-containing protein At3g49710 (721 aa).

14 PPR repeats span residues 42–72 (STYL…TEEP), 73–103 (NVFS…IPQP), 104–138 (DTVS…GFEV), 139–169 (DGFT…SGGF), 172–202 (YSSV…MDEL), 204–238 (DEVS…GFKI), 239–273 (DMFT…GFHQ), 274–307 (NSHV…ILSP), 308–343 (DLVV…GHRP), 344–378 (DDCS…HIPS), 380–410 (RISV…MPEL), 411–445 (NAVS…GIAP), 446–476 (NKIT…MKET), and 482–512 (EAEH…MPYK). The segment at 517-592 (AWAALLGACR…KPGCSWIEVK (76 aa)) is type E motif. The tract at residues 593-623 (KKKHVFVAEDWSHPMIREVNEYLEEMMKKMK) is type E(+) motif. Positions 624 to 721 (KVGYVMDKKW…DGKCSCGDYW (98 aa)) are type DYW motif.

The protein belongs to the PPR family. PCMP-H subfamily.

This Arabidopsis thaliana (Mouse-ear cress) protein is Pentatricopeptide repeat-containing protein At3g49710 (PCMP-H79).